Here is a 603-residue protein sequence, read N- to C-terminus: Serine/threonine-protein kinase PLK1 (603 aa).

The interval 1–35 (MSAAVTAGKLARAPADPGKAGVPGVAAPGAPAAAP) is disordered. The residue at position 2 (Ser2) is an N-acetylserine. Thr6 carries the phosphothreonine modification. Residues 13 to 35 (APADPGKAGVPGVAAPGAPAAAP) are compositionally biased toward low complexity. A Glycyl lysine isopeptide (Lys-Gly) (interchain with G-Cter in ubiquitin) cross-link involves residue Lys19. The 253-residue stretch at 53 to 305 (YVRGRFLGKG…INELLNDEFF (253 aa)) folds into the Protein kinase domain. ATP contacts are provided by residues 59-67 (LGKGGFAKC) and Lys82. Ser103 carries the post-translational modification Phosphoserine. Glu131 serves as a coordination point for ATP. Position 137 is a phosphoserine (Ser137). Catalysis depends on Asp176, which acts as the Proton acceptor. ATP contacts are provided by residues 178–181 (KLGN) and Asp194. The segment at 194–221 (DFGLATKVEYDGERKKTLCGTPNYIAPE) is activation loop. Thr210 carries the phosphothreonine; by AURKA modification. Thr214 carries the phosphothreonine modification. At Ser269 the chain carries Phosphoserine; by autocatalysis. Ser335 bears the Phosphoserine mark. The short motif at 337 to 340 (RKPL) is the D-box that targets the protein for proteasomal degradation in anaphase element. Residue Lys338 forms a Glycyl lysine isopeptide (Lys-Gly) (interchain with G-Cter in SUMO2) linkage. Residues 338-364 (KPLTVLNKGLENPLPERPREKEEPVVR) are disordered. The segment covering 351–364 (LPERPREKEEPVVR) has biased composition (basic and acidic residues). Residues Ser375 and Ser450 each carry the phosphoserine modification. One can recognise a POLO box 1 domain in the interval 410–488 (WVSKWVDYSD…LKYFRNYMSE (79 aa)). A Glycyl lysine isopeptide (Lys-Gly) (interchain with G-Cter in ubiquitin) cross-link involves residue Lys492. The interval 493 to 507 (AGANITPREGDELAR) is linker. Thr498 bears the Phosphothreonine mark. Positions 510–592 (YLRTWFRTRS…ARTMVDKLLS (83 aa)) constitute a POLO box 2 domain. The segment at 538–540 (HTK) is important for interaction with phosphorylated proteins.

The protein belongs to the protein kinase superfamily. Ser/Thr protein kinase family. CDC5/Polo subfamily. In terms of assembly, interacts with CEP170. Interacts with EVI5. Interacts with FAM29A. Interacts with SLX4/BTBD12. Interacts with TTDN1. Interacts (via POLO-box domain) with the phosphorylated form of BUB1, CDC25C and CENPU. Interacts with KIF2A. Interacts with CYLD. Part of an astrin (SPAG5)-kinastrin (SKAP) complex containing KNSTRN, SPAG5, PLK1, DYNLL1 and SGO2. Interacts with BIRC6/bruce. Interacts with CDK1-phosphorylated FRY; this interaction occurs in mitotic cells, but not in interphase cells. FRY interaction facilitates AURKA-mediated PLK1 phosphorylation. Interacts with CDK1-phosphorylated DCTN6 during mitotic prometaphase; the interaction facilitates recruitment to kinetochores. Interacts with CEP68; the interaction phosphorylates CEP68. Interacts (via POLO-box domain) with DCTN1. Interacts with CEP20 in later G1, S, G2 and M phases of the cell cycle; this interaction recruits PLK1 to centrosomes, a step required for S phase progression. Interacts with KLHL22. Interacts (via POLO box domains) with NEDD9/HEF1 (via C-terminus). Interacts with FIRRM (via N-terminus region); required for maintaining, but not activating, PLK1 kinase activity. Interacts with FZR1. Interacts with SKA3; the interaction promotes the stability of PLK1; the interaction promotes the stability of PLK1. Interacts with the MTMR3:MTMR4 heterooligomer; brings CEP55 and PLK1 together during early mitosis, regulating the phosphorylation of CEP55 by PLK1 and its recruitment to the midbody where it can mediate cell abscission. Post-translationally, catalytic activity is enhanced by phosphorylation of Thr-210. Phosphorylation at Thr-210 is first detected on centrosomes in the G2 phase of the cell cycle, peaks in prometaphase and gradually disappears from centrosomes during anaphase. Dephosphorylation at Thr-210 at centrosomes is probably mediated by protein phosphatase 1C (PP1C), via interaction with PPP1R12A/MYPT1. Autophosphorylation and phosphorylation of Ser-137 may not be significant for the activation of PLK1 during mitosis, but may enhance catalytic activity during recovery after DNA damage checkpoint. Phosphorylated in vitro by STK10. Ubiquitinated by the anaphase promoting complex/cyclosome (APC/C) in anaphase and following DNA damage, leading to its degradation by the proteasome. Ubiquitination is mediated via its interaction with FZR1/CDH1. Ubiquitination and subsequent degradation prevents entry into mitosis and is essential to maintain an efficient G2 DNA damage checkpoint. Monoubiquitination at Lys-492 by the BCR(KLHL22) ubiquitin ligase complex does not lead to degradation: it promotes PLK1 dissociation from phosphoreceptor proteins and subsequent removal from kinetochores, allowing silencing of the spindle assembly checkpoint (SAC) and chromosome segregation. In terms of tissue distribution, placenta and colon.

It localises to the nucleus. It is found in the chromosome. The protein localises to the centromere. Its subcellular location is the kinetochore. The protein resides in the cytoplasm. It localises to the cytoskeleton. It is found in the microtubule organizing center. The protein localises to the centrosome. Its subcellular location is the spindle. The protein resides in the midbody. The catalysed reaction is L-seryl-[protein] + ATP = O-phospho-L-seryl-[protein] + ADP + H(+). It carries out the reaction L-threonyl-[protein] + ATP = O-phospho-L-threonyl-[protein] + ADP + H(+). Activated by phosphorylation of Thr-210 by AURKA; phosphorylation by AURKA is enhanced by BORA. Once activated, activity is stimulated by binding target proteins. Binding of target proteins has no effect on the non-activated kinase. Several inhibitors targeting PLKs are currently in development and are under investigation in a growing number of clinical trials, such as BI 2536, an ATP-competitive PLK1 inhibitor or BI 6727, a dihydropteridinone that specifically inhibits the catalytic activity of PLK1. Its function is as follows. Serine/threonine-protein kinase that performs several important functions throughout M phase of the cell cycle, including the regulation of centrosome maturation and spindle assembly, the removal of cohesins from chromosome arms, the inactivation of anaphase-promoting complex/cyclosome (APC/C) inhibitors, and the regulation of mitotic exit and cytokinesis. Polo-like kinase proteins act by binding and phosphorylating proteins that are already phosphorylated on a specific motif recognized by the POLO box domains. Phosphorylates BORA, BUB1B/BUBR1, CCNB1, CDC25C, CEP55, ECT2, ERCC6L, FBXO5/EMI1, FOXM1, KIF20A/MKLP2, CENPU, NEDD1, NINL, NPM1, NUDC, PKMYT1/MYT1, KIZ, MRE11, PPP1R12A/MYPT1, POLQ, PRC1, RACGAP1/CYK4, RAD51, RHNO1, SGO1, STAG2/SA2, TEX14, TOPORS, p73/TP73, TPT1, WEE1 and HNRNPU. Plays a key role in centrosome functions and the assembly of bipolar spindles by phosphorylating KIZ, NEDD1 and NINL. NEDD1 phosphorylation promotes subsequent targeting of the gamma-tubulin ring complex (gTuRC) to the centrosome, an important step for spindle formation. Phosphorylation of NINL component of the centrosome leads to NINL dissociation from other centrosomal proteins. Involved in mitosis exit and cytokinesis by phosphorylating CEP55, ECT2, KIF20A/MKLP2, CENPU, PRC1 and RACGAP1. Recruited at the central spindle by phosphorylating and docking PRC1 and KIF20A/MKLP2; creates its own docking sites on PRC1 and KIF20A/MKLP2 by mediating phosphorylation of sites subsequently recognized by the POLO box domains. Phosphorylates RACGAP1, thereby creating a docking site for the Rho GTP exchange factor ECT2 that is essential for the cleavage furrow formation. Promotes the central spindle recruitment of ECT2. Plays a central role in G2/M transition of mitotic cell cycle by phosphorylating CCNB1, CDC25C, FOXM1, CENPU, PKMYT1/MYT1, PPP1R12A/MYPT1 and WEE1. Part of a regulatory circuit that promotes the activation of CDK1 by phosphorylating the positive regulator CDC25C and inhibiting the negative regulators WEE1 and PKMYT1/MYT1. Also acts by mediating phosphorylation of cyclin-B1 (CCNB1) on centrosomes in prophase. Phosphorylates FOXM1, a key mitotic transcription regulator, leading to enhance FOXM1 transcriptional activity. Involved in kinetochore functions and sister chromatid cohesion by phosphorylating BUB1B/BUBR1, FBXO5/EMI1 and STAG2/SA2. PLK1 is high on non-attached kinetochores suggesting a role of PLK1 in kinetochore attachment or in spindle assembly checkpoint (SAC) regulation. Required for kinetochore localization of BUB1B. Regulates the dissociation of cohesin from chromosomes by phosphorylating cohesin subunits such as STAG2/SA2. Phosphorylates SGO1: required for spindle pole localization of isoform 3 of SGO1 and plays a role in regulating its centriole cohesion function. Mediates phosphorylation of FBXO5/EMI1, a negative regulator of the APC/C complex during prophase, leading to FBXO5/EMI1 ubiquitination and degradation by the proteasome. Acts as a negative regulator of p53 family members: phosphorylates TOPORS, leading to inhibit the sumoylation of p53/TP53 and simultaneously enhance the ubiquitination and subsequent degradation of p53/TP53. Phosphorylates the transactivation domain of the transcription factor p73/TP73, leading to inhibit p73/TP73-mediated transcriptional activation and pro-apoptotic functions. Phosphorylates BORA, and thereby promotes the degradation of BORA. Contributes to the regulation of AURKA function. Also required for recovery after DNA damage checkpoint and entry into mitosis. Phosphorylates MISP, leading to stabilization of cortical and astral microtubule attachments required for proper spindle positioning. Together with MEIKIN, acts as a regulator of kinetochore function during meiosis I: required both for mono-orientation of kinetochores on sister chromosomes and protection of centromeric cohesin from separase-mediated cleavage. Phosphorylates CEP68 and is required for its degradation. Regulates nuclear envelope breakdown during prophase by phosphorylating DCTN1 resulting in its localization in the nuclear envelope. Phosphorylates the heat shock transcription factor HSF1, promoting HSF1 nuclear translocation upon heat shock. Phosphorylates HSF1 also in the early mitotic period; this phosphorylation regulates HSF1 localization to the spindle pole, the recruitment of the SCF(BTRC) ubiquitin ligase complex induicing HSF1 degradation, and hence mitotic progression. Regulates mitotic progression by phosphorylating RIOK2. Through the phosphorylation of DZIP1 regulates the localization during mitosis of the BBSome, a ciliary protein complex involved in cilium biogenesis. Regulates DNA repair during mitosis by mediating phosphorylation of POLQ and RHNO1, thereby promoting POLQ recruitment to DNA damage sites. Phosphorylates ATXN10 which may play a role in the regulation of cytokinesis and may stimulate the proteasome-mediated degradation of ATXN10. This chain is Serine/threonine-protein kinase PLK1 (PLK1), found in Homo sapiens (Human).